Consider the following 213-residue polypeptide: Putative nascent polypeptide-associated complex subunit alpha-like protein (213 aa).

Residues 1–46 (MPGEATETVPAIEQQLLQPQAETGSGTESDSDESVPELEEQDSTQV) form a disordered region. The segment covering 15–28 (QLLQPQAETGSGTE) has biased composition (polar residues). The span at 29 to 42 (SDSDESVPELEEQD) shows a compositional bias: acidic residues. A phosphoserine mark is found at serine 43 and serine 131. Positions 69–134 (RRSEKKARKA…AKIEDLSQEA (66 aa)) constitute an NAC-A/B domain. N6-acetyllysine; alternate is present on lysine 141. Lysine 141 participates in a covalent cross-link: Glycyl lysine isopeptide (Lys-Gly) (interchain with G-Cter in SUMO2); alternate. A Phosphothreonine modification is found at threonine 160. A phosphoserine mark is found at serine 165, serine 185, and serine 201. Residues 175–211 (VEIKDIELVLSQANVWGAKAVRALKNSNDIVNAIMEL) form the UBA domain. The residue at position 212 (threonine 212) is a Phosphothreonine.

It belongs to the NAC-alpha family.

This chain is Putative nascent polypeptide-associated complex subunit alpha-like protein, found in Homo sapiens (Human).